We begin with the raw amino-acid sequence, 439 residues long: Ribosomal protein uS12 methylthiotransferase RimO (439 aa).

An MTTase N-terminal domain is found at 3–118; the sequence is KKFYITTLGC…AGKILREKFP (116 aa). Cysteine 12, cysteine 48, cysteine 81, cysteine 157, cysteine 161, and cysteine 164 together coordinate [4Fe-4S] cluster. The Radical SAM core domain occupies 143 to 370; that stretch reads NYSKPYAYVK…RDVHLAILEE (228 aa). In terms of domain architecture, TRAM spans 373–438; sequence ESRIGQTYDA…EYDMNGTWIS (66 aa).

It belongs to the methylthiotransferase family. RimO subfamily. [4Fe-4S] cluster is required as a cofactor.

It is found in the cytoplasm. It carries out the reaction L-aspartate(89)-[ribosomal protein uS12]-hydrogen + (sulfur carrier)-SH + AH2 + 2 S-adenosyl-L-methionine = 3-methylsulfanyl-L-aspartate(89)-[ribosomal protein uS12]-hydrogen + (sulfur carrier)-H + 5'-deoxyadenosine + L-methionine + A + S-adenosyl-L-homocysteine + 2 H(+). Its function is as follows. Catalyzes the methylthiolation of an aspartic acid residue of ribosomal protein uS12. This chain is Ribosomal protein uS12 methylthiotransferase RimO, found in Leptospira borgpetersenii serovar Hardjo-bovis (strain JB197).